A 510-amino-acid chain; its full sequence is MIWHVQNENFILDSTRIFMKAFHLLLFDGSFIFPECILIFGLILLLMIDSTSDQKDIPWLYFISSTSLVMSITALLFRWREEPMISFSGNFQTNNFNEIFQFLILLCSTLCIPLSVEYIECTEMAITEFLLFVLTATLGGMFLCGANDLITIFVAPECFSLCSYLLSGYTKKDVRSNEATTKYLLMGGASSSILVHAFSWLYGSSGGEIELQEIVNGLINTQMYNSPGISIALIFITVGIGFKLSLAPSHQWTPDVYEGSPTPVVAFLSVTSKVAASASATRIFDIPFYFSSNEWHLLLEILAILSMIVGNLIAITQTSMKRMLAYSSIGQIGYVIIGIIVGDSNGGYASMITYMLFYISMNLGTFACIVLFGLRTGTDNIRDYAGLYTKDPFLALSLALCLLSLGGLPPLAGFFGKLHLFWCGWQAGLYFLVLIGLLTSVVSIYYYLKIIKLLMTGRNQEITPHVRNYRRSPLRSNNSIELSMIVCVIASTIPGISMNPIVEIAQDTLF.

13 helical membrane-spanning segments follow: residues 24 to 44 (LLLFDGSFIFPECILIFGLIL), 57 to 77 (IPWLYFISSTSLVMSITALLF), 99 to 119 (IFQFLILLCSTLCIPLSVEYI), 124 to 144 (MAITEFLLFVLTATLGGMFLC), 149 to 169 (LITIFVAPECFSLCSYLLSGY), 183 to 203 (YLLMGGASSSILVHAFSWLYG), 227 to 247 (PGISIALIFITVGIGFKLSLA), 295 to 315 (WHLLLEILAILSMIVGNLIAI), 323 to 343 (MLAYSSIGQIGYVIIGIIVGD), 354 to 374 (YMLFYISMNLGTFACIVLFGL), 395 to 415 (ALSLALCLLSLGGLPPLAGFF), 418 to 438 (LHLFWCGWQAGLYFLVLIGLL), and 482 to 502 (LSMIVCVIASTIPGISMNPIV).

This sequence belongs to the complex I subunit 2 family. NDH is composed of at least 16 different subunits, 5 of which are encoded in the nucleus.

It localises to the plastid. The protein resides in the chloroplast thylakoid membrane. It catalyses the reaction a plastoquinone + NADH + (n+1) H(+)(in) = a plastoquinol + NAD(+) + n H(+)(out). It carries out the reaction a plastoquinone + NADPH + (n+1) H(+)(in) = a plastoquinol + NADP(+) + n H(+)(out). Functionally, NDH shuttles electrons from NAD(P)H:plastoquinone, via FMN and iron-sulfur (Fe-S) centers, to quinones in the photosynthetic chain and possibly in a chloroplast respiratory chain. The immediate electron acceptor for the enzyme in this species is believed to be plastoquinone. Couples the redox reaction to proton translocation, and thus conserves the redox energy in a proton gradient. This chain is NAD(P)H-quinone oxidoreductase subunit 2 B, chloroplastic, found in Manihot esculenta (Cassava).